The sequence spans 105 residues: N(4)-acetylcytidine amidohydrolase (105 aa).

One can recognise an ASCH domain in the interval Thr-7–Glu-93. Lys-21 acts as the Proton acceptor in catalysis. Thr-24 serves as the catalytic Nucleophile. Residue Glu-74 is the Proton donor of the active site.

The protein belongs to the N(4)-acetylcytidine amidohydrolase family.

The catalysed reaction is N(4)-acetylcytidine + H2O = cytidine + acetate + H(+). The enzyme catalyses N(4)-acetyl-2'-deoxycytidine + H2O = 2'-deoxycytidine + acetate + H(+). It catalyses the reaction N(4)-acetylcytosine + H2O = cytosine + acetate + H(+). Its function is as follows. Catalyzes the hydrolysis of N(4)-acetylcytidine (ac4C). The polypeptide is N(4)-acetylcytidine amidohydrolase (Shewanella baltica (strain OS223)).